We begin with the raw amino-acid sequence, 122 residues long: Basic phospholipase A2 homolog Gln49-PLA2 (122 aa).

Cystine bridges form between Cys26–Cys115, Cys28–Cys44, Cys43–Cys95, Cys49–Cys122, Cys50–Cys88, Cys57–Cys81, and Cys75–Cys86.

This sequence belongs to the phospholipase A2 family. Group II subfamily. Q49 sub-subfamily. As to quaternary structure, monomer. As to expression, expressed by the venom gland.

It localises to the secreted. Functionally, snake venom phospholipase A2 (PLA2) homolog that shows local myotoxicity, apparent anticoagulant activity, and neurotoxicity. Shows analgesic effect on mice due to a decrease of action potentials and nerve conduction velocity. These effects are caused by inhibition of voltage-gated ion channels (potassium (Kv) and sodium (Nav)). In addition, analgesic effects are antagonized by naloxone, implying the mechanism of action is correlated with opioid receptors (probably indirectly). Does not show detectable PLA2 activity on egg yolk phospholipids. The chain is Basic phospholipase A2 homolog Gln49-PLA2 from Gloydius ussuriensis (Ussuri mamushi).